We begin with the raw amino-acid sequence, 81 residues long: Trefoil factor 1 (81 aa).

An N-terminal signal peptide occupies residues 1–21 (MEHKVTCVLAMVLMLALSSLA). Residue Gln22 is modified to Pyrrolidone carboxylic acid. In terms of domain architecture, P-type spans 26-69 (ETCAVIPRERINCGFPGVTAQQCKEKGCCFDDSVRGFPWCFRPL). Disulfide bonds link Cys28–Cys54, Cys38–Cys53, and Cys48–Cys65.

The protein localises to the secreted. Its function is as follows. Stabilizer of the mucous gel overlying the gastrointestinal mucosa that provides a physical barrier against various noxious agents. The sequence is that of Trefoil factor 1 (Tff1) from Rattus norvegicus (Rat).